A 338-amino-acid polypeptide reads, in one-letter code: Thiosulfate-binding protein (338 aa).

An N-terminal signal peptide occupies residues 1–25 (MAVNLLKKNSLALVASLLLAGHVQA).

Belongs to the prokaryotic sulfate-binding protein family. The complex is composed of two ATP-binding proteins (CysA), two transmembrane proteins (CysT and CysW) and a solute-binding protein (CysP).

Its subcellular location is the periplasm. Its function is as follows. Part of the ABC transporter complex CysAWTP (TC 3.A.1.6.1) involved in sulfate/thiosulfate import. This protein specifically binds thiosulfate and is involved in its transmembrane transport. The protein is Thiosulfate-binding protein (cysP) of Escherichia coli (strain K12).